Here is a 169-residue protein sequence, read N- to C-terminus: Secreted LysM effector Blys5 (169 aa).

An N-terminal signal peptide occupies residues 1–19 (MKLSVISAVFVSLAAAAAA). 2 consecutive LysM domains span residues 47 to 94 (TYYQ…YYCV) and 121 to 167 (QWYK…NVCV).

It belongs to the secreted LysM effector family.

Its function is as follows. Secreted effector that enables the plant pathogenic fungus to manipulate host defenses for successful infection. Required for the full virulence to infect insect hosts. Protects fungal hyphae against the hydrolytic activity of chitinase and plays an important role in evasion of insect immunities. Binds chitin and can additionally bind chitosan and cellulose. Coats and protects the cell walls of insect pathogens from host cell recognition and additionally shields fungal cells from the hydrolysis of insect chitinases. The polypeptide is Secreted LysM effector Blys5 (Beauveria bassiana (strain ARSEF 2860) (White muscardine disease fungus)).